We begin with the raw amino-acid sequence, 717 residues long: Polyribonucleotide nucleotidyltransferase (717 aa).

Mg(2+) is bound by residues Asp488 and Asp494. The KH domain maps to Pro555–Ile614. One can recognise an S1 motif domain in the interval Gly624–Lys692.

It belongs to the polyribonucleotide nucleotidyltransferase family. Requires Mg(2+) as cofactor.

The protein resides in the cytoplasm. It catalyses the reaction RNA(n+1) + phosphate = RNA(n) + a ribonucleoside 5'-diphosphate. Its function is as follows. Involved in mRNA degradation. Catalyzes the phosphorolysis of single-stranded polyribonucleotides processively in the 3'- to 5'-direction. In Rhizobium meliloti (strain 1021) (Ensifer meliloti), this protein is Polyribonucleotide nucleotidyltransferase.